The chain runs to 417 residues: MREFKSYTVNFGPQHPAAHGVLRMVLEMEGETVRRADPHIGLLHRATEKLAESKPYNQSIGYMDRLDYVSMLCNEHAYVMAIEKLLGIEAPIRAQYIRVMFDEITRILNHLMWLGAHGLDVGAMTAFLYCFREREDLMDCYEAVSGARMHAAYYRPGGVYRDLPESMPKYEPSKFRSKKELELMNAARQGTMLDFIEDFTERFPGCVDEYETLLTENRIWRQRLVDVGVVSPERALQLGFSGPMLRGSGIEWDLRKKQPYDVYDRVEFDIPVGTNGDCYDRYLVRIEEMRQSNRIIKQCVDWLRHNPGPVMLEDHKVAPPSREEMKDDMESLIHHFKLFTEGYTTPPGEVYAAVEAPKGEFGCYMISDGANKPYRVKLRAPGFAHLSAMDEMARGHMLADVVAIIGTQDIVFGEIDR.

The protein belongs to the complex I 49 kDa subunit family. NDH-1 is composed of 14 different subunits. Subunits NuoB, C, D, E, F, and G constitute the peripheral sector of the complex.

It localises to the cell inner membrane. The catalysed reaction is a quinone + NADH + 5 H(+)(in) = a quinol + NAD(+) + 4 H(+)(out). Its function is as follows. NDH-1 shuttles electrons from NADH, via FMN and iron-sulfur (Fe-S) centers, to quinones in the respiratory chain. The immediate electron acceptor for the enzyme in this species is believed to be ubiquinone. Couples the redox reaction to proton translocation (for every two electrons transferred, four hydrogen ions are translocated across the cytoplasmic membrane), and thus conserves the redox energy in a proton gradient. The polypeptide is NADH-quinone oxidoreductase subunit D (Alkalilimnicola ehrlichii (strain ATCC BAA-1101 / DSM 17681 / MLHE-1)).